The following is a 347-amino-acid chain: NADH-ubiquinone oxidoreductase chain 2 (347 aa).

The next 10 helical transmembrane spans lie at 1 to 21 (MNPL…GIVM), 25 to 45 (HWLT…PILM), 59 to 79 (YFLT…INLV), 96 to 116 (IILT…FWVP), 122 to 142 (VHLP…MSVL), 148 to 168 (MINL…GGWG), 200 to 220 (MALL…LTFM), 240 to 260 (ITTI…LSGF), 274 to 294 (NSII…FFYM), and 325 to 345 (LLSP…MLML).

This sequence belongs to the complex I subunit 2 family. As to quaternary structure, core subunit of respiratory chain NADH dehydrogenase (Complex I) which is composed of 45 different subunits. Interacts with TMEM242.

The protein resides in the mitochondrion inner membrane. The catalysed reaction is a ubiquinone + NADH + 5 H(+)(in) = a ubiquinol + NAD(+) + 4 H(+)(out). Core subunit of the mitochondrial membrane respiratory chain NADH dehydrogenase (Complex I) which catalyzes electron transfer from NADH through the respiratory chain, using ubiquinone as an electron acceptor. Essential for the catalytic activity and assembly of complex I. In Thoopterus nigrescens (Swift fruit bat), this protein is NADH-ubiquinone oxidoreductase chain 2.